We begin with the raw amino-acid sequence, 392 residues long: Type III polyketide synthase B (392 aa).

Lys-57 to Thr-64 serves as a coordination point for CoA. Residue Cys-166 is the Nucleophile of the active site. A substrate-binding site is contributed by Gly-218 to Asp-219. CoA-binding positions include Leu-269, Gly-309–Ala-312, and Ala-312.

The protein belongs to the thiolase-like superfamily. Chalcone/stilbene synthases family. In terms of assembly, homodimer. Interacts with 4CLL1/ACOS5 and TKPR1. As to expression, expressed in flowers and flower buds (at protein level). Mostly confined to anther tapetal cells.

Its subcellular location is the endoplasmic reticulum. Its pathway is secondary metabolite biosynthesis; flavonoid biosynthesis. Functionally, plant type III polyketide synthases (PKSs) that catalyzes the condensation of malonyl-CoA units with various CoA ester starter molecules to generate a diverse array of natural products including long-chain alkyl alpha-pyrones. Accepts up to C(20) chain-length fatty acyl CoAs as starter substrates, and carries out sequential condensations with malonyl-CoA to produce triketide and tetraketide alpha-pyrones, potential sporopollenin precursors. Favorite substrates for are midchain- and v-hydroxylated fatty acyl-CoAs (e.g. 12-hydroxyoctadecanoyl-CoA and 16-hydroxyhexadecanoyl-CoA). Required for pollen development and sporopollenin biosynthesis, the major constituent of exine in the outer pollen wall. In vitro, can use 4-coumaroyl-coenzyme A as substrate to produce bis-noryangonin and fatty acyl-coenzyme A as substrate to produce medium-chain alkyl pyrones. May play a role in both the synthesis of pollen fatty acids and phenolics found in exine. The sequence is that of Type III polyketide synthase B from Arabidopsis thaliana (Mouse-ear cress).